Consider the following 893-residue polypeptide: TBC domain-containing protein kinase-like protein (893 aa).

A Protein kinase domain is found at 1–273 (MFPLKDAEMG…PDELMKDQVF (273 aa)). A Rab-GAP TBC domain is found at 466–651 (DIPPLMRGLT…HLWDTLLLGN (186 aa)).

Belongs to the protein kinase superfamily. As to quaternary structure, component of the FERRY complex composed of five subunits, TBCK, PPP1R21, FERRY3, CRYZL1 and GATD1 with a ratio of 1:2:1:2:4, respectively.

It is found in the cytoplasm. The protein localises to the cytoskeleton. Its subcellular location is the spindle. It localises to the midbody. The protein resides in the early endosome. Its function is as follows. Component of the FERRY complex (Five-subunit Endosomal Rab5 and RNA/ribosome intermediary). The FERRY complex directly interacts with mRNAs and RAB5A, and functions as a RAB5A effector involved in the localization and the distribution of specific mRNAs most likely by mediating their endosomal transport. The complex recruits mRNAs and ribosomes to early endosomes through direct mRNA-interaction. Also involved in the modulation of mTOR signaling and expression of mTOR complex components. Involved in the control of actin-cytoskeleton organization. This chain is TBC domain-containing protein kinase-like protein (Tbck), found in Mus musculus (Mouse).